A 201-amino-acid polypeptide reads, in one-letter code: Large ribosomal subunit protein eL15B (201 aa).

Positions 161-182 (SRGLTSIGKKSRGIGKGHRYNN) are disordered. Residues 169 to 179 (KKSRGIGKGHR) are compositionally biased toward basic residues. S183 carries the post-translational modification Phosphoserine.

Belongs to the eukaryotic ribosomal protein eL15 family. Component of the large ribosomal subunit (LSU). Mature yeast ribosomes consist of a small (40S) and a large (60S) subunit. The 40S small subunit contains 1 molecule of ribosomal RNA (18S rRNA) and at least 33 different proteins. The large 60S subunit contains 3 rRNA molecules (25S, 5.8S and 5S rRNA) and at least 46 different proteins.

The protein localises to the cytoplasm. Its subcellular location is the nucleus. It localises to the nucleolus. Its function is as follows. Component of the ribosome, a large ribonucleoprotein complex responsible for the synthesis of proteins in the cell. The small ribosomal subunit (SSU) binds messenger RNAs (mRNAs) and translates the encoded message by selecting cognate aminoacyl-transfer RNA (tRNA) molecules. The large subunit (LSU) contains the ribosomal catalytic site termed the peptidyl transferase center (PTC), which catalyzes the formation of peptide bonds, thereby polymerizing the amino acids delivered by tRNAs into a polypeptide chain. The nascent polypeptides leave the ribosome through a tunnel in the LSU and interact with protein factors that function in enzymatic processing, targeting, and the membrane insertion of nascent chains at the exit of the ribosomal tunnel. The sequence is that of Large ribosomal subunit protein eL15B (rpl1502) from Schizosaccharomyces pombe (strain 972 / ATCC 24843) (Fission yeast).